The primary structure comprises 510 residues: NAD(P)H-quinone oxidoreductase subunit 2 A, chloroplastic (510 aa).

A run of 13 helical transmembrane segments spans residues 24–44 (LLLF…GLIL), 57–77 (IPWL…ALLF), 99–119 (IFQF…VEYI), 124–144 (MAIT…MFLC), 149–169 (LITI…LSGY), 183–203 (YLLM…WLYG), 227–247 (PGIS…LSPA), 295–315 (WHLL…LIAI), 323–343 (MLAY…IVGD), 354–374 (YMLF…LFGL), 395–415 (ALSL…AGFF), 418–438 (LYLF…IGLL), and 484–504 (MIVC…IIAI).

It belongs to the complex I subunit 2 family. NDH is composed of at least 16 different subunits, 5 of which are encoded in the nucleus.

It localises to the plastid. Its subcellular location is the chloroplast thylakoid membrane. It carries out the reaction a plastoquinone + NADH + (n+1) H(+)(in) = a plastoquinol + NAD(+) + n H(+)(out). The catalysed reaction is a plastoquinone + NADPH + (n+1) H(+)(in) = a plastoquinol + NADP(+) + n H(+)(out). Functionally, NDH shuttles electrons from NAD(P)H:plastoquinone, via FMN and iron-sulfur (Fe-S) centers, to quinones in the photosynthetic chain and possibly in a chloroplast respiratory chain. The immediate electron acceptor for the enzyme in this species is believed to be plastoquinone. Couples the redox reaction to proton translocation, and thus conserves the redox energy in a proton gradient. This chain is NAD(P)H-quinone oxidoreductase subunit 2 A, chloroplastic, found in Solanum tuberosum (Potato).